We begin with the raw amino-acid sequence, 423 residues long: Putative gustatory receptor 97a (423 aa).

At 1–31 (MRFLRRQTRRLRSIWQRSLPVRFRRGKLHTQ) the chain is on the cytoplasmic side. The helical transmembrane segment at 32–52 (LVTICLYATVFLNILYGVYLG) threads the bilayer. Residues 53-65 (RFSFRRKKFVFSK) are Extracellular-facing. Residues 66–86 (GLTIYSLFVATFFALFYIWNI) traverse the membrane as a helical segment. The Cytoplasmic portion of the chain corresponds to 87–99 (YNEISTGQINLRD). Residues 100–120 (TIGIYCYMNVCVCLFNYVTQW) traverse the membrane as a helical segment. Residues 121 to 152 (EKTLQIIRFQNSVPLFKVLDSLDISAMIVWRA) are Extracellular-facing. Residues 153-173 (FIYGLLKIVFCPLITYITLIL) traverse the membrane as a helical segment. Over 174–200 (YHRRSISESQWTSVTTTKTMLPLIVSN) the chain is Cytoplasmic. The helical transmembrane segment at 201 to 221 (QINNCFFGGLVLANLIFAAVN) threads the bilayer. The Extracellular segment spans residues 222 to 278 (RKLHGIVKEANMLQSPVQMNLHKPYYRMRRFCELADLLDELARKYGFTASRSKNYLR). Residues 279 to 299 (FTDWSMVLSMLMNLLGITMGC) form a helical membrane-spanning segment. Over 300-317 (YNQYLAIADHYINEEPFD) the chain is Cytoplasmic. The chain crosses the membrane as a helical span at residues 318–338 (LFLAIVLVVFLAVPFLELVMV). Residues 339-423 (ARISNQTLTR…SDLTLRFSLK (85 aa)) are Extracellular-facing. Residues N343 and N393 are each glycosylated (N-linked (GlcNAc...) asparagine).

This sequence belongs to the insect chemoreceptor superfamily. Gustatory receptor (GR) family. Gr22e subfamily. In terms of tissue distribution, in larvae, is expressed in neurons of the terminal external chemosensory organ.

It is found in the cell membrane. In terms of biological role, probable gustatory receptor which mediates acceptance or avoidance behavior, depending on its substrates. The sequence is that of Putative gustatory receptor 97a (Gr97a) from Drosophila melanogaster (Fruit fly).